Consider the following 287-residue polypeptide: Phosphatidylinositol transfer protein 5 (287 aa).

The tract at residues 252-287 (FHNNNNNNSNNSNNNNNNNTQPQRSSFFSRSTDGNK) is disordered. Positions 254–270 (NNNNNNSNNSNNNNNNN) are enriched in low complexity. Positions 271 to 287 (TQPQRSSFFSRSTDGNK) are enriched in polar residues.

The protein belongs to the PtdIns transfer protein family. PI transfer class IIA subfamily.

Functionally, phosphatidylinositol transfer proteins mediate the monomeric transport of lipids by shielding a lipid from the aqueous environment and binding the lipid in a hydrophobic cavity. The protein is Phosphatidylinositol transfer protein 5 (pitE) of Dictyostelium discoideum (Social amoeba).